Reading from the N-terminus, the 130-residue chain is Anti-adapter protein IraD (130 aa).

It belongs to the GpW/Gp25 family. IraD subfamily. As to quaternary structure, interacts with RssB.

Its subcellular location is the cytoplasm. Functionally, inhibits RpoS proteolysis by regulating RssB activity, thereby increasing the stability of the sigma stress factor RpoS during oxidative stress. Its effect on RpoS stability is due to its interaction with RssB, which probably blocks the interaction of RssB with RpoS, and the consequent delivery of the RssB-RpoS complex to the ClpXP protein degradation pathway. The polypeptide is Anti-adapter protein IraD (Escherichia coli O45:K1 (strain S88 / ExPEC)).